The following is a 315-amino-acid chain: N-acetyl-D-glutamate racemase (315 aa).

Residues Asp147, Glu173, and Asp196 each coordinate Mg(2+).

The protein belongs to the mandelate racemase/muconate lactonizing enzyme family. Mg(2+) is required as a cofactor.

The enzyme catalyses N-acetyl-D-glutamate = N-acetyl-L-glutamate. It functions in the pathway amino-acid degradation. In terms of biological role, racemase involved in a deamination-independent D-glutamate degradation pathway, named the DgcN-DgcA pathway. Catalyzes the conversion of N-acetyl-D-glutamate to N-acetyl-L-glutamate. Also shows racemase activity towards the dipeptide L-Ala-D-Glu, a key constituent of peptidoglycan muropeptides, suggesting that it may also contribute to the degradation of peptidoglycans. The chain is N-acetyl-D-glutamate racemase from Pseudoalteromonas sp.